We begin with the raw amino-acid sequence, 356 residues long: MFS-type transporter tazK (356 aa).

A run of 9 helical transmembrane segments spans residues 12-32 (LPFF…ALGH), 42-62 (FLGG…LADF), 69-89 (GVAV…GAIT), 102-122 (MTAW…FIIL), 178-198 (ILLS…LLFV), 211-231 (GAID…VGAF), 257-277 (LHPM…FAWT), 288-308 (ILAG…SLAY), and 320-340 (AISG…LFAP).

The protein belongs to the major facilitator superfamily. CAR1 family.

Its subcellular location is the membrane. Its function is as follows. MFS-type transporter; part of the gene cluster that mediates the biosynthesis of azaterrilone A and other azaphilones, a class of fungal metabolites characterized by a highly oxygenated pyrano-quinone bicyclic core and exhibiting a broad range of bioactivities. This is MFS-type transporter tazK from Aspergillus terreus (strain NIH 2624 / FGSC A1156).